A 489-amino-acid polypeptide reads, in one-letter code: L-asparagine permease 1 (489 aa).

Helical transmembrane passes span 25-45 (QLQMIGIGGAIGTGLFLGASG), 49-69 (KAGPGLFLVYGVCGVFVFLIL), 100-120 (AVGWMYFLHWAMTSIVDTTAI), 137-157 (ILALIALTVVLSMNLISVEWF), 162-182 (FWAALIKVLALMAFLVVGTVF), 210-230 (WLPLLIVTSGVVFAYSAVELV), 255-275 (IAIFYVGSVALLALLLPYTAY), 289-309 (IGFHGAGDLMNIVVLTAALSS), 344-364 (YGGIVLTAVITLFGVALNAFK), 369-389 (FEIVLNMSALGIIAGWATIVL), 413-433 (SPYSGYLTLLFLLVVLVTMAS), and 439-459 (TWTVATLIIVIPALTAGWYLV).

Belongs to the amino acid-polyamine-organocation (APC) superfamily. Amino acid transporter (AAT) (TC 2.A.3.1) family.

Its subcellular location is the cell membrane. This Mycobacterium bovis (strain ATCC BAA-935 / AF2122/97) protein is L-asparagine permease 1 (ansP1).